Reading from the N-terminus, the 478-residue chain is Keratin, type II cytoskeletal 8 (478 aa).

Positions 1–97 (MSIRVTQKSY…DPNIQAVRTQ (97 aa)) are head. Phosphoserine; by PKC/PRKCE is present on serine 9. Lysine 11 participates in a covalent cross-link: Glycyl lysine isopeptide (Lys-Gly) (interchain with G-Cter in SUMO2). Residues serine 13, serine 15, serine 21, and serine 22 each carry the phosphoserine modification. Positions 16-44 (APRSFSSRSYTSGPGSRISSSAFSRVGSS) are disordered. An Omega-N-methylarginine modification is found at arginine 23. Phosphoserine; by PKC/PRKCE is present on serine 24. Threonine 26 carries the phosphothreonine modification. Phosphoserine occurs at positions 27 and 31. Arginine 32 carries the post-translational modification Omega-N-methylarginine. Phosphoserine occurs at positions 34 and 39. The residue at position 40 (arginine 40) is an Omega-N-methylarginine. A phosphoserine mark is found at serine 43 and serine 44. Arginine 48 is subject to Asymmetric dimethylarginine; alternate. Arginine 48 carries the post-translational modification Omega-N-methylarginine; alternate. Position 81 is a phosphoserine; by MAPK (serine 81). Positions 98-133 (EKEQIKTLNNKFASFIDKVRHLEQQNKVLETKWNLL) are coil 1A. Residues 98–409 (EKEQIKTLNN…KLLEGEESRL (312 aa)) form the IF rod domain. Lysine 108 is modified (N6-malonyllysine). Glycyl lysine isopeptide (Lys-Gly) (interchain with G-Cter in SUMO2) cross-links involve residues lysine 129 and lysine 137. The tract at residues 134–150 (QQQKTARSNIDNMFESY) is linker 1. Positions 151 to 242 (INNLRRQLET…QLYEEEIREM (92 aa)) are coil 1B. Residue lysine 204 forms a Glycyl lysine isopeptide (Lys-Gly) (interchain with G-Cter in SUMO1); alternate linkage. Lysine 204 participates in a covalent cross-link: Glycyl lysine isopeptide (Lys-Gly) (interchain with G-Cter in SUMO2); alternate. An N6-acetyllysine modification is found at lysine 214. The residue at position 235 (tyrosine 235) is a Phosphotyrosine. Residues 243 to 266 (QSQISDTSVVLEMDNNRNLDLDGI) form a linker 12 region. A coil 2 region spans residues 267–405 (IAEVKAQYEE…ATYRKLLEGE (139 aa)). The interval 268-389 (AEVKAQYEEI…EYQELMNVKL (122 aa)) is necessary for interaction with PNN. Lysine 271 participates in a covalent cross-link: Glycyl lysine isopeptide (Lys-Gly) (interchain with G-Cter in SUMO2). Residue serine 281 is modified to Phosphoserine. A Glycyl lysine isopeptide (Lys-Gly) (interchain with G-Cter in SUMO2) cross-link involves residue lysine 292. Lysine 302 participates in a covalent cross-link: Glycyl lysine isopeptide (Lys-Gly) (interchain with G-Cter in SUMO2); alternate. The residue at position 302 (lysine 302) is an N6-acetyllysine; alternate. A Glycyl lysine isopeptide (Lys-Gly) (interchain with G-Cter in SUMO2) cross-link involves residue lysine 311. Residue lysine 332 forms a Glycyl lysine isopeptide (Lys-Gly) (interchain with G-Cter in SUMO2); alternate linkage. At lysine 332 the chain carries N6-acetyllysine; alternate. Residue serine 337 is modified to Phosphoserine. Lysine 400 is covalently cross-linked (Glycyl lysine isopeptide (Lys-Gly) (interchain with G-Cter in SUMO2)). The interval 406-478 (ESRLESGMQN…VSESSDVLSK (73 aa)) is tail. Phosphoserine occurs at positions 407, 411, 417, 424, and 433. Lysine 467 is covalently cross-linked (Glycyl lysine isopeptide (Lys-Gly) (interchain with G-Cter in SUMO1); alternate). Residue lysine 467 forms a Glycyl lysine isopeptide (Lys-Gly) (interchain with G-Cter in SUMO2); alternate linkage. Phosphoserine is present on residues serine 470, serine 472, serine 473, and serine 477.

This sequence belongs to the intermediate filament family. As to quaternary structure, heterotetramer of two type I and two type II keratins. Forms a heterodimer with KRT18. Associates with KRT20. Interacts with PNN. When associated with KRT19, interacts with DMD. Interacts with TCHP. Interacts with APEX1. Interacts with GPER1. Interacts with EPPK1. Interacts with PKP1 and PKP2. Post-translationally, O-glycosylated. O-GlcNAcylation at multiple sites increases solubility, and decreases stability by inducing proteasomal degradation. In terms of processing, O-glycosylated (O-GlcNAcylated), in a cell cycle-dependent manner. As to expression, expressed in bladder, liver, exocervix and (in very low amounts) esophagus.

It localises to the cytoplasm. The protein resides in the nucleus. The protein localises to the nucleoplasm. It is found in the nucleus matrix. Functionally, together with KRT19, helps to link the contractile apparatus to dystrophin at the costameres of striated muscle. This Bos taurus (Bovine) protein is Keratin, type II cytoskeletal 8 (KRT8).